Consider the following 469-residue polypeptide: E3 ubiquitin-protein ligase TRIM21 (469 aa).

Residues 16–55 (CSICLDPMVEPMSIECGHSFCQECISEVGKEGGSVCPVCR) form an RING-type zinc finger. The B box-type zinc-finger motif lies at 87 to 128 (PHGELCVVHREKIHLFCEEDGKALCWVCSQSQKHRDHPMVPI). Cys-92, His-95, Cys-114, and His-120 together coordinate Zn(2+). Residues 128–245 (IEEAAQEYQE…RRGSALELLQ (118 aa)) adopt a coiled-coil conformation. Residue Ser-266 is modified to Phosphoserine. A B30.2/SPRY domain is found at 268–467 (DLRNVFYVPG…APLILCPLKT (200 aa)).

It belongs to the TRIM/RBCC family. In terms of assembly, homotrimer. Interacts (via C-terminus) with IRF8 (via C-terminus). Component of a SCF(SKP2)-like complex containing CUL1, SKP1, TRIM21 and SKP2. Interacts with CALR, CUL1, FBXW11, HSPA5, IKBKB, IRF3, SKP1 and VCP. Interacts with SKP2; the interaction with SKP2 does not depend on an intact F-box domain. Interacts (via N-terminus and C-terminus) with DCP2 (via N-terminus and C-terminus). Interacts with ULK1, BECN1 and with ATG8 family members, including GABARAP, GABARAPL1, GABARAPL2 and MAP1LC3C/LC3C. Interacts with TRIM21 and SQSTM1/sequestosome 1. Interacts with IRF3. Interacts (via the SPRY domain) with NMI (via coiled-coil domain); the interaction promotes 'Lys-63'-linked ubiquitination of NMI. Interacts with IFI35 and NMI; the interaction facilitates NMI-IFI35 complex formation. Post-translationally, autoubiquitinated; does not lead to its proteasomal degradation. Deubiquitinated by USP4; leading to its stabilization.

It localises to the cytoplasm. It is found in the cytoplasmic vesicle. The protein localises to the autophagosome. Its subcellular location is the nucleus. The protein resides in the P-body. It localises to the stress granule. It catalyses the reaction S-ubiquitinyl-[E2 ubiquitin-conjugating enzyme]-L-cysteine + [acceptor protein]-L-lysine = [E2 ubiquitin-conjugating enzyme]-L-cysteine + N(6)-ubiquitinyl-[acceptor protein]-L-lysine.. Its pathway is protein modification; protein ubiquitination. Its function is as follows. E3 ubiquitin-protein ligase whose activity is dependent on E2 enzymes, UBE2D1, UBE2D2, UBE2E1 and UBE2E2. Forms a ubiquitin ligase complex in cooperation with the E2 UBE2D2 that is used not only for the ubiquitination of USP4 and IKBKB but also for its self-ubiquitination. Component of cullin-RING-based SCF (SKP1-CUL1-F-box protein) E3 ubiquitin-protein ligase complexes such as SCF(SKP2)-like complexes. A TRIM21-containing SCF(SKP2)-like complex is shown to mediate ubiquitination of CDKN1B ('Thr-187' phosphorylated-form), thereby promoting its degradation by the proteasome. Monoubiquitinates IKBKB that will negatively regulates Tax-induced NF-kappa-B signaling. Negatively regulates IFN-beta production post-pathogen recognition by catalyzing polyubiquitin-mediated degradation of IRF3. Mediates the ubiquitin-mediated proteasomal degradation of IgG1 heavy chain, which is linked to the VCP-mediated ER-associated degradation (ERAD) pathway. Promotes IRF8 ubiquitination, which enhanced the ability of IRF8 to stimulate cytokine genes transcription in macrophages. Plays a role in the regulation of the cell cycle progression. Enhances the decapping activity of DCP2. Exists as a ribonucleoprotein particle present in all mammalian cells studied and composed of a single polypeptide and one of four small RNA molecules. At least two isoforms are present in nucleated and red blood cells, and tissue specific differences in RO/SSA proteins have been identified. The common feature of these proteins is their ability to bind HY RNAs.2. Involved in the regulation of innate immunity and the inflammatory response in response to IFNG/IFN-gamma. Organizes autophagic machinery by serving as a platform for the assembly of ULK1, Beclin 1/BECN1 and ATG8 family members and recognizes specific autophagy targets, thus coordinating target recognition with assembly of the autophagic apparatus and initiation of autophagy. Also regulates autophagy through FIP200/RB1CC1 ubiquitination and subsequent decreased protein stability. Represses the innate antiviral response by facilitating the formation of the NMI-IFI35 complex through 'Lys-63'-linked ubiquitination of NMI. During viral infection, promotes cell pyroptosis by mediating 'Lys-6'-linked ubiquitination of ISG12a/IFI27, facilitating its translocation into the mitochondria and subsequent CASP3 activation. When up-regulated through the IFN/JAK/STAT signaling pathway, promotes 'Lys-27'-linked ubiquitination of MAVS, leading to the recruitment of TBK1 and up-regulation of innate immunity. Mediates 'Lys-63'-linked polyubiquitination of G3BP1 in response to heat shock, leading to stress granule disassembly. The protein is E3 ubiquitin-protein ligase TRIM21 (TRIM21) of Bos taurus (Bovine).